The sequence spans 145 residues: Ribonuclease H (145 aa).

The RNase H type-1 domain occupies 2-143 (SKKEVIIYTD…ADSLARKAII (142 aa)). The Mg(2+) site is built by Asp11, Glu49, Asp71, and Asp135.

Belongs to the RNase H family. Monomer. Mg(2+) is required as a cofactor.

The protein resides in the cytoplasm. The catalysed reaction is Endonucleolytic cleavage to 5'-phosphomonoester.. Functionally, endonuclease that specifically degrades the RNA of RNA-DNA hybrids. This Wolbachia pipientis wMel protein is Ribonuclease H.